The sequence spans 580 residues: Protein O-linked-mannose beta-1,4-N-acetylglucosaminyltransferase 2 (580 aa).

The Cytoplasmic portion of the chain corresponds to 1 to 4; sequence MHLS. The chain crosses the membrane as a helical; Signal-anchor for type II membrane protein span at residues 5 to 25; that stretch reads AVFNALLVSVLAAVLWKHVRL. The Lumenal segment spans residues 26–580; sequence REHAATLEEE…PFADVLVCST (555 aa). Asparagine 99 and asparagine 276 each carry an N-linked (GlcNAc...) asparagine glycan. The Fibronectin type-III domain occupies 488–580; the sequence is ARCQASVQGA…PFADVLVCST (93 aa).

Belongs to the glycosyltransferase 61 family. Mainly expressed in the central nervous system.

Its subcellular location is the endoplasmic reticulum membrane. The catalysed reaction is 3-O-(alpha-D-mannosyl)-L-threonyl-[protein] + UDP-N-acetyl-alpha-D-glucosamine = 3-O-(N-acetyl-beta-D-glucosaminyl-(1-&gt;4)-alpha-D-mannosyl)-L-threonyl-[protein] + UDP + H(+). It participates in protein modification; protein glycosylation. In terms of biological role, O-linked mannose beta-1,4-N-acetylglucosaminyltransferase that transfers UDP-N-acetyl-D-glucosamine to the 4-position of the mannose to generate N-acetyl-D-glucosamine-beta-1,4-O-D-mannosylprotein. Involved in the biosynthesis of the phosphorylated O-mannosyl trisaccharide (N-acetylgalactosamine-beta-3-N-acetylglucosamine-beta-4-(phosphate-6-)mannose), a carbohydrate structure present in alpha-dystroglycan (DAG1), which is required for binding laminin G-like domain-containing extracellular proteins with high affinity. The polypeptide is Protein O-linked-mannose beta-1,4-N-acetylglucosaminyltransferase 2 (Pomgnt2) (Mus musculus (Mouse)).